The following is a 185-amino-acid chain: uncharacterized protein (185 aa).

Residues 1-56 (MSSFTIPSPSSFSLSNSYNQTSPHSFTLRNSRSNFEFHRLRLDVESRRRSTSLRSN) constitute a chloroplast transit peptide. Residues 48–67 (RRSTSLRSNCSTKGTDSGEN) are disordered. Positions 52 to 64 (SLRSNCSTKGTDS) are enriched in polar residues. Positions 105-138 (QAEQQKQVQEIQEEVLERAKKAKERAARETMEEQ) form a coiled coil.

It localises to the plastid. Its subcellular location is the chloroplast. The protein resides in the plastoglobule. This is an uncharacterized protein from Arabidopsis thaliana (Mouse-ear cress).